The primary structure comprises 331 residues: MRRGLLLLNLGTPNNADIRAVKLYLREFLTDKRVIDLPTIPRYILVYCLILPFRSPKSAQAYQSIWTEKGSPLLYHSQNLVTKLQSALKDEYKIALGMRYGTPSITTALAELKDCHSLTILPLFPQYSSAATGSAIEKTLSHLANQEIIPSIKIIRDFYQRPEYIQAQAKIMKPYIKDNFHLLFSYHGIPERHIHKSGCDTLCPQTCTPIYDKNQACYRAQCYQTSLLLAKELQLGTHQYTTAFQSRLGKTPWIKPYTDEIFAELISKGIKNIVVSCPSFVADCLETLEEIGIRAKEQWEKLGGEQFILTPCMNDHPEWIKAIQSIVNEQF.

Fe cation contacts are provided by histidine 187 and glutamate 286.

The protein belongs to the ferrochelatase family.

Its subcellular location is the cytoplasm. The catalysed reaction is heme b + 2 H(+) = protoporphyrin IX + Fe(2+). Its pathway is porphyrin-containing compound metabolism; protoheme biosynthesis; protoheme from protoporphyrin-IX: step 1/1. In terms of biological role, catalyzes the ferrous insertion into protoporphyrin IX. The polypeptide is Ferrochelatase (Legionella pneumophila subsp. pneumophila (strain Philadelphia 1 / ATCC 33152 / DSM 7513)).